The chain runs to 720 residues: DNA helicase II (720 aa).

The UvrD-like helicase ATP-binding domain maps to aspartate 8–threonine 286. ATP contacts are provided by residues glycine 32–arginine 37 and arginine 284. One can recognise a UvrD-like helicase C-terminal domain in the interval serine 287–glycine 564.

This sequence belongs to the helicase family. UvrD subfamily.

The enzyme catalyses Couples ATP hydrolysis with the unwinding of duplex DNA by translocating in the 3'-5' direction.. It carries out the reaction ATP + H2O = ADP + phosphate + H(+). A helicase with DNA-dependent ATPase activity. Unwinds DNA duplexes with 3'-5' polarity. Translocates on single-stranded DNA with 3'-5' polarity. Initiates unwinding more efficiently from a nicked substrate than double-stranded DNA. Involved in the post-incision events of nucleotide excision repair and methyl-directed mismatch repair, and probably also in repair of alkylated DNA. This Escherichia coli (strain K12) protein is DNA helicase II.